The sequence spans 796 residues: Bud site selection protein 27 (796 aa).

Positions 81-121 (KEEAITFVDDKLKLMEDAIEQFNLKIEEAKKTLDNLNHMED) form a coiled coil. The segment covering 152 to 168 (VISSSVTPTTKQPSQSN) has biased composition (polar residues). Disordered regions lie at residues 152–197 (VISS…EENL), 300–344 (LRAQ…QVGF), 421–458 (EGEA…TTRS), 535–624 (EKEP…AKTG), and 752–796 (ATAS…DSKP). Basic and acidic residues-rich tracts occupy residues 169–197 (SKKE…EENL) and 306–318 (SQDH…DVNK). A compositionally biased stretch (basic residues) spans 427–441 (SNRRTRVSRFRKDRA). The span at 535-550 (EKEPEINSKSEFETPF) shows a compositional bias: basic and acidic residues. Over residues 551-568 (KKKKLKSLQKPRSSKSMK) the composition is skewed to basic residues. A compositionally biased stretch (acidic residues) spans 579-589 (ISDDDYDDDDD). Ser-580 bears the Phosphoserine mark. Over residues 601–610 (NNTDEQDKFP) the composition is skewed to basic and acidic residues.

The protein belongs to the prefoldin subunit alpha family.

It is found in the cytoplasm. Its function is as follows. Involved in gene expression controlled by TOR kinase and nutrient signaling. May also be involved in positioning the proximal bud pole signal. This chain is Bud site selection protein 27 (BUD27), found in Saccharomyces cerevisiae (strain ATCC 204508 / S288c) (Baker's yeast).